Consider the following 362-residue polypeptide: Microfibril-associated glycoprotein 3 (362 aa).

Residues 1–19 form the signal peptide; the sequence is MKLHCCLFTLVASIIVPAA. Residues 20-146 lie on the Extracellular side of the membrane; the sequence is FVLEDVDFNQ…TLRVIFTSGD (127 aa). N-linked (GlcNAc...) asparagine glycans are attached at residues Asn-36, Asn-41, and Asn-110. In terms of domain architecture, Ig-like C2-type spans 45–137; the sequence is PSSFELSASS…SPIRASYSVT (93 aa). A disulfide bridge links Cys-73 with Cys-124. The helical transmembrane segment at 147–167 threads the bilayer; it reads MSVYYMIVCLIAFTITLILNV. Topologically, residues 168 to 362 are cytoplasmic; sequence TRLCMMSSHL…KDGAYENSQL (195 aa). Disordered regions lie at residues 282 to 306 and 319 to 362; these read GIYVINPEMGRSNSPGGDSDDGSLN and HLQS…NSQL. A compositionally biased stretch (polar residues) spans 319-337; the sequence is HLQSETKSIDTESQGSSHF.

In terms of processing, glycosylated.

It is found in the cell membrane. Component of the elastin-associated microfibrils. The protein is Microfibril-associated glycoprotein 3 (MFAP3) of Pongo abelii (Sumatran orangutan).